Here is a 313-residue protein sequence, read N- to C-terminus: MSDLLLLGLIGGLTLLLLLTLLAFAGYSGLLAGVEVSAGSPPIRNVTVAYKFHMGLYGETGRLFTESCSISPKLRSIAVYYDNPHMVPPDKCRCAVGSILSEGEESPSPELIDLYQKFGFKVFSFPAPSHVVTATFPYTTILSIWLATRRVHPALDTYIKERKLCAYPRLEIYQEDQIHFMCPLARQGDFYVPEMKETEWKWRGLVEAIDTQVDGTGADTMSDTSSVSLEVSPGSRETSAATLSPGASSRGWDDGDTRSEHSYSESGASGSSFEELDLEGEGPLGESRLDPGTEPLGTTKWLWEPTAPEKGKE.

Topologically, residues 1–6 (MSDLLL) are lumenal. Residues 7 to 31 (LGLIGGLTLLLLLTLLAFAGYSGLL) traverse the membrane as a helical; Signal-anchor for type III membrane protein segment. Residues 32–313 (AGVEVSAGSP…EPTAPEKGKE (282 aa)) are Cytoplasmic-facing. The disordered stretch occupies residues 193–313 (PEMKETEWKW…EPTAPEKGKE (121 aa)). Over residues 219–247 (DTMSDTSSVSLEVSPGSRETSAATLSPGA) the composition is skewed to polar residues. 2 positions are modified to phosphoserine: Ser-239 and Ser-244. Basic and acidic residues predominate over residues 251–263 (GWDDGDTRSEHSY). Low complexity predominate over residues 264–273 (SESGASGSSF). The LIR motif signature appears at 273-276 (FEEL).

In terms of assembly, interacts (via the LIR motif) with ATG8 family proteins MAP1LC3A, MAP1LC3B, GABARAP and GABARAPL1. Interacts with VCP/p97; bridging VCP/p97 to covalent DNA-protein cross-links (DPCs). Interacts with TOP1 (when sumoylated).

It localises to the endoplasmic reticulum membrane. Its subcellular location is the cytoplasmic vesicle. The protein localises to the autophagosome. The protein resides in the cytoplasm. It is found in the cytosol. It localises to the nucleus. Its subcellular location is the chromosome. Major reticulophagy (also called ER-phagy) receptor that acts independently of other candidate reticulophagy receptors to remodel subdomains of the endoplasmic reticulum into autophagosomes upon nutrient stress, which then fuse with lysosomes for endoplasmic reticulum turnover. The ATG8-containing isolation membrane (IM) cradles a tubular segment of TEX264-positive ER near a three-way junction, allowing the formation of a synapse of 2 juxtaposed membranes with trans interaction between the TEX264 and ATG8 proteins. Expansion of the IM would extend the capture of ER, possibly through a 'zipper-like' process involving continued trans TEX264-ATG8 interactions, until poorly understood mechanisms lead to the fission of relevant membranes and, ultimately, autophagosomal membrane closure. Also involved in the repair of covalent DNA-protein cross-links (DPCs) during DNA synthesis: acts by bridging VCP/p97 to covalent DNA-protein cross-links (DPCs) and initiating resolution of DPCs by SPRTN. In Homo sapiens (Human), this protein is Testis-expressed protein 264.